The following is a 1013-amino-acid chain: Poly [ADP-ribose] polymerase 1 (1013 aa).

Ala2 bears the N-acetylalanine mark. A PARP-type 1 zinc finger spans residues Tyr9–Gly93. Zn(2+)-binding residues include Cys21 and Cys24. At Ser41 the chain carries Phosphoserine. Zn(2+) is bound by residues His53 and Cys56. N6-acetyllysine is present on residues Lys97 and Lys105. The segment at Phe113–Lys203 adopts a PARP-type 2 zinc-finger fold. Residues Cys125 and Cys128 each contribute to the Zn(2+) site. Lys131 carries the N6-acetyllysine modification. Zn(2+) contacts are provided by His159 and Cys162. Residues Ser177, Ser179, and Ser185 each carry the phosphoserine modification. A Glycyl lysine isopeptide (Lys-Gly) (interchain with G-Cter in SUMO2) cross-link involves residue Lys192. The disordered stretch occupies residues Gln198–Lys233. Residue Lys203 forms a Glycyl lysine isopeptide (Lys-Gly) (interchain with G-Cter in SUMO1); alternate linkage. Lys203 is covalently cross-linked (Glycyl lysine isopeptide (Lys-Gly) (interchain with G-Cter in SUMO2); alternate). 2 short sequence motifs (nuclear localization signal) span residues Lys207 to Lys209 and Lys221 to Lys226. The 135-residue stretch at Lys225–Pro359 folds into the PADR1 zinc-binding domain. A Glycyl lysine isopeptide (Lys-Gly) (interchain with G-Cter in SUMO2) cross-link involves residue Lys249. A phosphoserine mark is found at Ser274 and Ser277. The interval Gly290–Glu332 is zinc ribbon. Cys295, Cys298, Cys311, and Cys321 together coordinate Zn(2+). Residues Phe357–Ser383 form a disordered region. The span at Ser372–Ser383 shows a compositional bias: polar residues. Residues Val373 to Lys523 form an automodification domain region. Positions Pro385–His476 constitute a BRCT domain. The residue at position 387 (Asp387) is a PolyADP-ribosyl aspartic acid. Residues Glu407, Glu413, Glu435, Glu437, Glu444, Glu445, and Glu456 each carry the polyADP-ribosyl glutamic acid modification. Residue Lys467 forms a Glycyl lysine isopeptide (Lys-Gly) (interchain with G-Cter in SUMO2) linkage. A polyADP-ribosyl glutamic acid mark is found at Glu471 and Glu484. Lys486 participates in a covalent cross-link: Glycyl lysine isopeptide (Lys-Gly) (interchain with G-Cter in SUMO1); alternate. Lys486 is covalently cross-linked (Glycyl lysine isopeptide (Lys-Gly) (interchain with G-Cter in SUMO2); alternate). Residues Glu488 and Glu491 each carry the polyADP-ribosyl glutamic acid modification. The segment at Pro495 to Asn516 is disordered. ADP-ribosylserine is present on residues Ser499, Ser503, and Ser506. Lys511 is covalently cross-linked (Glycyl lysine isopeptide (Lys-Gly) (interchain with G-Cter in SUMO2)). A polyADP-ribosyl glutamic acid mark is found at Glu512 and Glu513. Ser518 carries the post-translational modification ADP-ribosylserine. A PolyADP-ribosyl glutamic acid modification is found at Glu519. An N6-(ADP-ribosyl)lysine modification is found at Lys520. Residue Lys527 forms a Glycyl lysine isopeptide (Lys-Gly) (interchain with G-Cter in SUMO2) linkage. A WGR domain is found at Ser541–Phe637. Thr593 bears the Phosphothreonine mark. Lys599 and Lys620 each carry N6-acetyllysine. The PARP alpha-helical domain maps to Lys661–Arg778. Residue Lys747 forms a Glycyl lysine isopeptide (Lys-Gly) (interchain with G-Cter in SUMO1); alternate linkage. Residue Lys747 forms a Glycyl lysine isopeptide (Lys-Gly) (interchain with G-Cter in SUMO2); alternate linkage. Residues Ser781 and Ser785 each carry the phosphoserine modification. A PARP catalytic domain is found at Asp787–Trp1013. Residues His861–Ser863, Gly870, Arg877, and Ser903 contribute to the NAD(+) site. Glu987 (for poly [ADP-ribose] polymerase activity) is an active-site residue.

The protein belongs to the ARTD/PARP family. Homodimer; PARP-type zinc-fingers from separate PARP1 molecules form a dimer module that specifically recognizes DNA strand breaks. Heterodimer; heterodimerizes with PARP2. Interacts (via the PARP catalytic domain) with HPF1. Interacts with NMNAT1. Interacts with nucleosomes; with a preference for nucleosomes containing H2A.X. Interacts with APTX. Component of a base excision repair (BER) complex, containing at least XRCC1, PARP1, PARP2, POLB and LRIG3. Interacts with SRY. The SWAP complex consists of NPM1, NCL, PARP1 and SWAP70. Interacts with TIAM2. Interacts with PARP3; leading to activate PARP1 in absence of DNA. Interacts (when poly-ADP-ribosylated) with CHD1L (via macro domain). Interacts with the DNA polymerase alpha catalytic subunit POLA1; this interaction functions as part of the control of replication fork progression. Interacts with EEF1A1 and TXK. Interacts with RNF4. Interacts with RNF146. Interacts with ZNF423. Interacts with APLF. Interacts with SNAI1 (via zinc fingers); the interaction requires SNAI1 to be poly-ADP-ribosylated and non-phosphorylated (active) by GSK3B. Interacts (when poly-ADP-ribosylated) with PARP9. Interacts with NR4A3; activates PARP1 by improving acetylation of PARP1 and suppressing the interaction between PARP1 and SIRT1. Interacts (via catalytic domain) with PUM3; the interaction inhibits the poly-ADP-ribosylation activity of PARP1 and the degradation of PARP1 by CASP3 following genotoxic stress. Interacts with ZNF365. Interacts with RRP1B. Interacts with TIMELESS; the interaction is direct. Interacts with CGAS; leading to impede the formation of the PARP1-TIMELESS complex. Interacts with KHDC3L, the interaction is increased following the formation of DNA double-strand breaks. Interacts (when auto-poly-ADP-ribosylated) with XRCC1; leading to inhibit PARP1 ADP-ribosyltransferase activity. Interacts with SPINDOC; promoting PARP1 ADP-ribosyltransferase activity. Interacts with BANF1; leading to inhibit PARP1 ADP-ribosyltransferase activity in response to oxidative DNA damage. Interacts (when sumoylated and ubiquitinated) with VCP/p97; leading to its extraction from chromatin. Interacts with YARS1; promoting PARP1 ADP-ribosyltransferase activity. Interacts with PACMP micropeptide; Interacts with PACMP micropeptide; interaction. Interacts (when poly-ADP-ribosylated) with isoform 1 of MACROH2A1; MACROH2A1 specifically binds to poly-ADP-ribose chains and inhibits PARP1 activity, limiting the consumption of nuclear NAD(+). Interacts with CARM1; promoting recruitment to replication forks. Interacts with RECQL. Interacts with ZNF32; the interaction reshapes ZNF432 interacting proteins. Interacts with TPRN; TPRN interacts with a number of DNA damage response proteins, is recruited to sites of DNA damage and may play a role in DNA damage repair. In terms of assembly, interacts (when auto-poly-ADP-ribosylated) with AIFM1. Poly-ADP-ribosylated on serine, glutamate and aspartate residues by autocatalysis. Auto-ADP-ribosylation on serine takes place following interaction with HPF1. Auto poly-ADP-ribosylation on serine residues promotes its dissociation from chromatin. Poly-ADP-ribosylated by PARP2; poly-ADP-ribosylation mediates the recruitment of CHD1L to DNA damage sites. Mono-ADP-ribosylated at Lys-520 by SIRT6 in response to oxidative stress, promoting recruitment to double-strand breaks (DSBs) sites. In terms of processing, S-nitrosylated, leading to inhibit transcription regulation activity. Post-translationally, phosphorylated at Thr-593 by PRKDC in response to DNA damage following virus infection, promoting its translocation to the cytosol. Phosphorylated by TXK. Proteolytically cleaved by caspase-3 (CASP3) and caspase-7 (CASP7) in response to apoptosis to generate the Poly [ADP-ribose] polymerase 1, processed N-terminus and Poly [ADP-ribose] polymerase 1, processed C-terminus forms. In terms of processing, sumoylated with SUMO1 or SUMO2 by PIAS4 following prolonged residence (trapping) to chromatin. Sumoylation promotes ubiquitination by RNF4 and removal from chromatin by VCP/p97. Post-translationally, ubiquitinated by RNF4 following sumoylation by PIAS4 in response to prolonged residence (trapping) to chromatin. Ubiquitination promotes removal from chromatin by VCP/p97.

Its subcellular location is the chromosome. It localises to the nucleus. The protein resides in the nucleolus. It is found in the cytoplasm. The protein localises to the cytosol. The catalysed reaction is NAD(+) + (ADP-D-ribosyl)n-acceptor = nicotinamide + (ADP-D-ribosyl)n+1-acceptor + H(+).. It carries out the reaction L-seryl-[protein] + NAD(+) = O-(ADP-D-ribosyl)-L-seryl-[protein] + nicotinamide + H(+). It catalyses the reaction L-aspartyl-[protein] + NAD(+) = 4-O-(ADP-D-ribosyl)-L-aspartyl-[protein] + nicotinamide. The enzyme catalyses L-glutamyl-[protein] + NAD(+) = 5-O-(ADP-D-ribosyl)-L-glutamyl-[protein] + nicotinamide. The catalysed reaction is L-tyrosyl-[protein] + NAD(+) = O-(ADP-D-ribosyl)-L-tyrosyl-[protein] + nicotinamide + H(+). It carries out the reaction L-histidyl-[protein] + NAD(+) = N(tele)-(ADP-D-ribosyl)-L-histidyl-[protein] + nicotinamide + H(+). Its activity is regulated as follows. ADP-ribosyltransferase activity is regulated via an allosteric activation mechanism. In absence of activation signal, PARP1 is autoinhibited by the PARP alpha-helical domain (also named HD region), which prevents effective NAD(+)-binding. Activity is highly stimulated by signals, such as DNA strand breaks. Binding to damaged DNA unfolds the PARP alpha-helical domain, relieving autoinhibition. Poly-ADP-ribosyltransferase activity is tightly regulated and PARP1 is removed from damaged chromatin following initial poly-ADP-ribosylation of chromatin to avoid prolonged residence (trapping) that has cytotoxic consequences. A number of factors (VCP/p97) or post-translational modifications (auto-poly-ADP-ribosylation or ubiquitination) promote PARP1 removal from chromatin. Its function is as follows. Poly-ADP-ribosyltransferase that mediates poly-ADP-ribosylation of proteins and plays a key role in DNA repair. Mediates glutamate, aspartate, serine, histidine or tyrosine ADP-ribosylation of proteins: the ADP-D-ribosyl group of NAD(+) is transferred to the acceptor carboxyl group of target residues and further ADP-ribosyl groups are transferred to the 2'-position of the terminal adenosine moiety, building up a polymer with an average chain length of 20-30 units. Serine ADP-ribosylation of proteins constitutes the primary form of ADP-ribosylation of proteins in response to DNA damage. Specificity for the different amino acids is conferred by interacting factors, such as HPF1 and NMNAT1. Following interaction with HPF1, catalyzes serine ADP-ribosylation of target proteins; HPF1 confers serine specificity by completing the PARP1 active site. Also catalyzes tyrosine ADP-ribosylation of target proteins following interaction with HPF1. Following interaction with NMNAT1, catalyzes glutamate and aspartate ADP-ribosylation of target proteins; NMNAT1 confers glutamate and aspartate specificity. PARP1 initiates the repair of DNA breaks: recognizes and binds DNA breaks within chromatin and recruits HPF1, licensing serine ADP-ribosylation of target proteins, such as histones (H2BS6ADPr and H3S10ADPr), thereby promoting decompaction of chromatin and the recruitment of repair factors leading to the reparation of DNA strand breaks. HPF1 initiates serine ADP-ribosylation but restricts the polymerase activity of PARP1 in order to limit the length of poly-ADP-ribose chains. In addition to base excision repair (BER) pathway, also involved in double-strand breaks (DSBs) repair: together with TIMELESS, accumulates at DNA damage sites and promotes homologous recombination repair by mediating poly-ADP-ribosylation. Mediates the poly-ADP-ribosylation of a number of proteins, including itself, APLF, CHFR and NFAT5. In addition to proteins, also able to ADP-ribosylate DNA: catalyzes ADP-ribosylation of DNA strand break termini containing terminal phosphates and a 2'-OH group in single- and double-stranded DNA, respectively. Required for PARP9 and DTX3L recruitment to DNA damage sites. PARP1-dependent PARP9-DTX3L-mediated ubiquitination promotes the rapid and specific recruitment of 53BP1/TP53BP1, UIMC1/RAP80, and BRCA1 to DNA damage sites. PARP1-mediated DNA repair in neurons plays a role in sleep: senses DNA damage in neurons and promotes sleep, facilitating efficient DNA repair. In addition to DNA repair, also involved in other processes, such as transcription regulation, programmed cell death, membrane repair, adipogenesis and innate immunity. Acts as a repressor of transcription: binds to nucleosomes and modulates chromatin structure in a manner similar to histone H1, thereby altering RNA polymerase II. Acts both as a positive and negative regulator of transcription elongation, depending on the context. Acts as a positive regulator of transcription elongation by mediating poly-ADP-ribosylation of NELFE, preventing RNA-binding activity of NELFE and relieving transcription pausing. Acts as a negative regulator of transcription elongation in response to DNA damage by catalyzing poly-ADP-ribosylation of CCNT1, disrupting the phase separation activity of CCNT1 and subsequent activation of CDK9. Involved in replication fork progression following interaction with CARM1: mediates poly-ADP-ribosylation at replication forks, slowing fork progression. Poly-ADP-ribose chains generated by PARP1 also play a role in poly-ADP-ribose-dependent cell death, a process named parthanatos. Also acts as a negative regulator of the cGAS-STING pathway. Acts by mediating poly-ADP-ribosylation of CGAS: PARP1 translocates into the cytosol following phosphorylation by PRKDC and catalyzes poly-ADP-ribosylation and inactivation of CGAS. Acts as a negative regulator of adipogenesis: catalyzes poly-ADP-ribosylation of histone H2B on 'Glu-35' (H2BE35ADPr) following interaction with NMNAT1, inhibiting phosphorylation of H2B at 'Ser-36' (H2BS36ph), thereby blocking expression of pro-adipogenetic genes. Involved in the synthesis of ATP in the nucleus, together with NMNAT1, PARG and NUDT5. Nuclear ATP generation is required for extensive chromatin remodeling events that are energy-consuming. In terms of biological role, promotes AIFM1-mediated apoptosis. This form, which translocates into the cytoplasm following cleavage by caspase-3 (CASP3) and caspase-7 (CASP7) in response to apoptosis, is auto-poly-ADP-ribosylated and serves as a poly-ADP-ribose carrier to induce AIFM1-mediated apoptosis. Functionally, this cleavage form irreversibly binds to DNA breaks and interferes with DNA repair, promoting DNA damage-induced apoptosis. This is Poly [ADP-ribose] polymerase 1 (PARP1) from Cricetulus griseus (Chinese hamster).